A 210-amino-acid polypeptide reads, in one-letter code: 3 beta-hydroxysteroid dehydrogenase/Delta 5--&gt;4-isomerase (210 aa).

Y29 acts as the Proton acceptor in catalysis. An NAD(+)-binding site is contributed by K33.

This sequence belongs to the 3-beta-HSD family.

The enzyme catalyses a 3beta-hydroxy-Delta(5)-steroid + NAD(+) = a 3-oxo-Delta(5)-steroid + NADH + H(+). It carries out the reaction a 3-oxo-Delta(5)-steroid = a 3-oxo-Delta(4)-steroid. It functions in the pathway lipid metabolism; steroid biosynthesis. In terms of biological role, catalyzes the oxidative conversion of Delta(5)-ene-3-beta-hydroxy steroid, and the oxidative conversion of ketosteroids. The 3-beta-HSD enzymatic system plays a crucial role in the biosynthesis of all classes of hormonal steroids. During viral infection, steroid production contributes to virulence by inhibiting the host inflammatory response. This is 3 beta-hydroxysteroid dehydrogenase/Delta 5--&gt;4-isomerase (OPG174) from Variola virus (isolate Human/India/Ind3/1967) (VARV).